A 1286-amino-acid polypeptide reads, in one-letter code: DNA-directed RNA polymerase 147 kDa polypeptide (1286 aa).

The protein belongs to the poxviridae DNA-directed RNA polymerase 147 kDa subunit family. In terms of assembly, the DNA-dependent RNA polymerase used for intermediate and late genes expression consists of eight subunits Rpo30/OPG66, Rpo7/OPG90, Rpo22/OPG103, Rpo147/OPG105, Rpo18/OPG119, Rpo19/OPG131, Rpo132/OPG151 and Rpo35/OPG156. The same holoenzyme, with the addition of the transcription-specificity factor OPG109, is used for early gene expression.

Its subcellular location is the virion. It carries out the reaction RNA(n) + a ribonucleoside 5'-triphosphate = RNA(n+1) + diphosphate. Functionally, part of the DNA-dependent RNA polymerase which catalyzes the transcription of viral DNA into RNA using the four ribonucleoside triphosphates as substrates. Responsible for the transcription of early, intermediate and late genes. DNA-dependent RNA polymerase associates with the early transcription factor (ETF), itself composed of OPG118 and OPG133, thereby allowing the early genes transcription. Late transcription, and probably also intermediate transcription, require newly synthesized RNA polymerase. The protein is DNA-directed RNA polymerase 147 kDa polypeptide (OPG105) of Vaccinia virus (strain Ankara) (VACV).